We begin with the raw amino-acid sequence, 533 residues long: CTP synthase (533 aa).

The tract at residues 1–264 (MKYIFVTGGV…GKLVTEKLNL (264 aa)) is amidoligase domain. Ser12 is a binding site for CTP. Ser12 serves as a coordination point for UTP. Residues 13–18 (SLGKGI) and Asp70 contribute to the ATP site. Residues Asp70 and Glu138 each contribute to the Mg(2+) site. CTP contacts are provided by residues 145 to 147 (DIE), 185 to 190 (KTKPTQ), and Lys221. UTP-binding positions include 185-190 (KTKPTQ) and Lys221. ATP is bound at residue 237–239 (KDA). Residues 289–533 (TIGIVGKYIE…HGLVKASIEK (245 aa)) form the Glutamine amidotransferase type-1 domain. L-glutamine is bound at residue Gly357. Cys384 (nucleophile; for glutamine hydrolysis) is an active-site residue. Residues 385-388 (LGMQ), Glu407, and Arg464 contribute to the L-glutamine site. Residues His509 and Glu511 contribute to the active site.

The protein belongs to the CTP synthase family. In terms of assembly, homotetramer.

It catalyses the reaction UTP + L-glutamine + ATP + H2O = CTP + L-glutamate + ADP + phosphate + 2 H(+). The catalysed reaction is L-glutamine + H2O = L-glutamate + NH4(+). It carries out the reaction UTP + NH4(+) + ATP = CTP + ADP + phosphate + 2 H(+). Its pathway is pyrimidine metabolism; CTP biosynthesis via de novo pathway; CTP from UDP: step 2/2. Its activity is regulated as follows. Allosterically activated by GTP, when glutamine is the substrate; GTP has no effect on the reaction when ammonia is the substrate. The allosteric effector GTP functions by stabilizing the protein conformation that binds the tetrahedral intermediate(s) formed during glutamine hydrolysis. Inhibited by the product CTP, via allosteric rather than competitive inhibition. In terms of biological role, catalyzes the ATP-dependent amination of UTP to CTP with either L-glutamine or ammonia as the source of nitrogen. Regulates intracellular CTP levels through interactions with the four ribonucleotide triphosphates. The polypeptide is CTP synthase (Methanococcus maripaludis (strain DSM 14266 / JCM 13030 / NBRC 101832 / S2 / LL)).